A 114-amino-acid chain; its full sequence is uncharacterized protein (114 aa).

The protein resides in the mitochondrion. This is an uncharacterized protein from Arabidopsis thaliana (Mouse-ear cress).